The sequence spans 150 residues: Ribosome maturation factor RimP (150 aa).

The protein belongs to the RimP family.

The protein resides in the cytoplasm. In terms of biological role, required for maturation of 30S ribosomal subunits. The sequence is that of Ribosome maturation factor RimP from Escherichia coli O9:H4 (strain HS).